Reading from the N-terminus, the 1290-residue chain is Vacuolating cytotoxin autotransporter (1290 aa).

An N-terminal signal peptide occupies residues 1-33 (MEIQQTHRKINRPLVSLALVGALVSITPQQSHA). The segment at 326–374 (PPEGGYKDKPKDKPSNTTQNNANNNQQNSAQNNSNTQVINPPNSAQKTE) is disordered. Basic and acidic residues predominate over residues 330-339 (GYKDKPKDKP). Residues 340 to 362 (SNTTQNNANNNQQNSAQNNSNTQ) are compositionally biased toward low complexity. The span at 363 to 374 (VINPPNSAQKTE) shows a compositional bias: polar residues. The Autotransporter domain occupies 1018–1290 (KYEKPTNVWA…ASNLGMRYSF (273 aa)).

It localises to the periplasm. Its subcellular location is the secreted. The protein resides in the cell surface. It is found in the cell outer membrane. Functionally, induces vacuolation of eukaryotic cells. Causes ulceration and gastric lesions. This Helicobacter pylori (strain ATCC 700392 / 26695) (Campylobacter pylori) protein is Vacuolating cytotoxin autotransporter (vacA).